The sequence spans 405 residues: Aspartokinase (405 aa).

Residue 7–10 coordinates ATP; sequence KYGG. 25-30 serves as a coordination point for substrate; the sequence is RIAHYR. Serine 41 contacts ATP. Residues 47-49, glutamate 74, 125-126, 150-153, and serine 153 each bind substrate; these read TDE, LD, and RGGS. ATP contacts are provided by residues 173–174, 179–184, and arginine 209; these read TD and YTTDPH. ACT domains lie at 263–342 and 344–405; these read IGLI…IAKV and IVGV…LDKA. Residues aspartate 270, 274 to 275, 288 to 290, glutamine 294, 355 to 356, 369 to 370, and 376 to 377 contribute to the substrate site; these read IA, AVD, VP, NI, and SE.

It belongs to the aspartokinase family. As to quaternary structure, heterotetramer consisting of 2 isoforms Alpha (catalytic and regulation) and of a homodimer of 2 isoforms Beta (regulation and thermostability).

The catalysed reaction is L-aspartate + ATP = 4-phospho-L-aspartate + ADP. The protein operates within amino-acid biosynthesis; L-lysine biosynthesis via DAP pathway; (S)-tetrahydrodipicolinate from L-aspartate: step 1/4. It functions in the pathway amino-acid biosynthesis; L-methionine biosynthesis via de novo pathway; L-homoserine from L-aspartate: step 1/3. It participates in amino-acid biosynthesis; L-threonine biosynthesis; L-threonine from L-aspartate: step 1/5. With respect to regulation, inhibited by threonine. In terms of biological role, catalyzes the phosphorylation of the beta-carboxyl group of aspartic acid with ATP to yield 4-phospho-L-aspartate, which is involved in the branched biosynthetic pathway leading to the biosynthesis of amino acids threonine, isoleucine and methionine. This Thermus thermophilus protein is Aspartokinase (ask).